The primary structure comprises 383 residues: Cobalt-precorrin-5B C(1)-methyltransferase (383 aa).

The disordered stretch occupies residues 1-24; it reads MQPSARRPFDLATPAPNGLRRGRT.

This sequence belongs to the CbiD family.

The catalysed reaction is Co-precorrin-5B + S-adenosyl-L-methionine = Co-precorrin-6A + S-adenosyl-L-homocysteine. Its pathway is cofactor biosynthesis; adenosylcobalamin biosynthesis; cob(II)yrinate a,c-diamide from sirohydrochlorin (anaerobic route): step 6/10. In terms of biological role, catalyzes the methylation of C-1 in cobalt-precorrin-5B to form cobalt-precorrin-6A. In Ralstonia nicotianae (strain ATCC BAA-1114 / GMI1000) (Ralstonia solanacearum), this protein is Cobalt-precorrin-5B C(1)-methyltransferase.